Reading from the N-terminus, the 518-residue chain is Protein nucleotidyltransferase YdiU (518 aa).

The tract at residues 1 to 22 (MTHLQFDNRLRAELPGDPEEGP) is disordered. Residues Gly100, Gly102, Arg103, Lys123, Asp135, Gly136, Arg193, and Arg200 each contribute to the ATP site. Asp270 (proton acceptor) is an active-site residue. Mg(2+)-binding residues include Asn271 and Asp280. Residue Asp280 participates in ATP binding.

This sequence belongs to the SELO family. Mg(2+) serves as cofactor. Requires Mn(2+) as cofactor.

It carries out the reaction L-seryl-[protein] + ATP = 3-O-(5'-adenylyl)-L-seryl-[protein] + diphosphate. The catalysed reaction is L-threonyl-[protein] + ATP = 3-O-(5'-adenylyl)-L-threonyl-[protein] + diphosphate. It catalyses the reaction L-tyrosyl-[protein] + ATP = O-(5'-adenylyl)-L-tyrosyl-[protein] + diphosphate. The enzyme catalyses L-histidyl-[protein] + UTP = N(tele)-(5'-uridylyl)-L-histidyl-[protein] + diphosphate. It carries out the reaction L-seryl-[protein] + UTP = O-(5'-uridylyl)-L-seryl-[protein] + diphosphate. The catalysed reaction is L-tyrosyl-[protein] + UTP = O-(5'-uridylyl)-L-tyrosyl-[protein] + diphosphate. Its function is as follows. Nucleotidyltransferase involved in the post-translational modification of proteins. It can catalyze the addition of adenosine monophosphate (AMP) or uridine monophosphate (UMP) to a protein, resulting in modifications known as AMPylation and UMPylation. This is Protein nucleotidyltransferase YdiU from Xanthomonas campestris pv. campestris (strain 8004).